The sequence spans 253 residues: Histone-arginine methyltransferase METTL23 (253 aa).

Residues 1–23 (MDSVRPRAPWAPPPDPASLDSPT) are disordered.

It belongs to the methyltransferase superfamily. METTL23 family. In terms of assembly, interacts with HSPA5, HSP90B1, TUBULIN, UGGT1 and UGGT2. Interacts with TET3. Interacts with STPG4. As to expression, ubiquitously expressed.

It localises to the nucleus. Its subcellular location is the cytoplasm. It catalyses the reaction L-arginyl-[protein] + 2 S-adenosyl-L-methionine = N(omega),N(omega)-dimethyl-L-arginyl-[protein] + 2 S-adenosyl-L-homocysteine + 2 H(+). Its function is as follows. Histone methyltransferase that dimethylates histone H3 at 'Arg-17', forming asymmetric dimethylarginine (H3R17me2a), leading to activate transcription via chromatin remodeling. Maternal factor involved in epigenetic chromatin reprogramming of the paternal genome in the zygote: mediates H3R17me2a, promoting histone H3.3 incorporation in the male pronucleus, leading to TET3 recruitment and subsequent DNA demethylation. In Mus musculus (Mouse), this protein is Histone-arginine methyltransferase METTL23.